The primary structure comprises 749 residues: Disintegrin and metalloproteinase domain-containing protein 10 (749 aa).

Positions 1–18 are cleaved as a signal peptide; sequence MGLLRLVFLLSWAASAGG. The propeptide occupies 19-213; that stretch reads LYGNPLNKYI…SGPVILRKKR (195 aa). The Extracellular portion of the chain corresponds to 19–673; the sequence is LYGNPLNKYI…NPELYENIAE (655 aa). The Cysteine switch motif lies at 170–177; it reads GGCADSSV. Cys172 is a Zn(2+) binding site. In terms of domain architecture, Peptidase M12B spans 220–457; that stretch reads NTCQLFIQTD…KENSCFVESG (238 aa). Disulfide bonds link Cys222/Cys314, Cys345/Cys452, Cys400/Cys436, Cys461/Cys496, Cys472/Cys485, Cys474/Cys480, Cys484/Cys516, Cys504/Cys512, Cys511/Cys537, Cys525/Cys544, Cys531/Cys563, Cys556/Cys568, Cys573/Cys599, Cys581/Cys608, Cys583/Cys598, Cys595/Cys640, and Cys633/Cys646. N-linked (GlcNAc...) asparagine glycosylation is found at Asn268 and Asn279. Zn(2+) is bound at residue His384. The active site involves Glu385. Residues His388 and His394 each coordinate Zn(2+). An N-linked (GlcNAc...) asparagine glycan is attached at Asn440. Residues 458–552 enclose the Disintegrin domain; it reads QPICGNGLVE…QCPPSEPREN (95 aa). Residue Asn552 is glycosylated (N-linked (GlcNAc...) asparagine). Residues 674-694 traverse the membrane as a helical segment; the sequence is WIVAHWWAVLLMGIALIMLMA. The Cytoplasmic portion of the chain corresponds to 695 to 749; it reads GFIKICSVHTPSSNPKLPPPKPLPGTLKRRRPPQTTQQPSRQRPRENYQMGHMRH. A disordered region spans residues 705–749; the sequence is PSSNPKLPPPKPLPGTLKRRRPPQTTQQPSRQRPRENYQMGHMRH. Residues 709 to 716 carry the SH3-binding motif; it reads PKLPPPKP. Thr720 bears the Phosphothreonine mark. Residues 723–729 carry the SH3-binding motif; that stretch reads RRRPPQT.

Zn(2+) serves as cofactor. Post-translationally, the precursor is cleaved by furin and PCSK7.

It is found in the membrane. The catalysed reaction is Endopeptidase of broad specificity.. Functionally, controls the proteolytic processing of Notch and mediates lateral inhibition during neurogenesis. This Xenopus laevis (African clawed frog) protein is Disintegrin and metalloproteinase domain-containing protein 10 (adam10).